The chain runs to 251 residues: uncharacterized protein (251 aa).

The N-acetyltransferase domain occupies 4-152; that stretch reads IEITKDNIED…YFQLMALTWN (149 aa).

It belongs to the acetyltransferase family.

This is an uncharacterized protein from Bacillus subtilis (strain 168).